Here is a 436-residue protein sequence, read N- to C-terminus: GTPase Der (436 aa).

EngA-type G domains follow at residues 4-167 (PTIA…PAQE) and 175-351 (IKFS…ESQN). GTP contacts are provided by residues 10–17 (GRPNVGKS), 57–61 (DTGGI), 119–122 (NKVD), 181–188 (GRPNVGKS), 229–233 (DTAGM), and 294–297 (NKWD). Residues 352–436 (TRIPSAVLND…PIHLIARKRK (85 aa)) form the KH-like domain.

It belongs to the TRAFAC class TrmE-Era-EngA-EngB-Septin-like GTPase superfamily. EngA (Der) GTPase family. Associates with the 50S ribosomal subunit.

In terms of biological role, GTPase that plays an essential role in the late steps of ribosome biogenesis. The protein is GTPase Der of Streptococcus suis (strain 98HAH33).